Consider the following 79-residue polypeptide: MQVLVRDNNVDQALKALKKKMQREGIFREMKLRGYYEKPSEKRAREKAEAVRRARKLARKKMQREGLLPMKPKPMPGMR.

Residues 58 to 79 (ARKKMQREGLLPMKPKPMPGMR) are disordered.

It belongs to the bacterial ribosomal protein bS21 family.

This Beijerinckia indica subsp. indica (strain ATCC 9039 / DSM 1715 / NCIMB 8712) protein is Small ribosomal subunit protein bS21.